A 415-amino-acid chain; its full sequence is Dynein assembly factor with WD repeat domains 1 (415 aa).

WD repeat units follow at residues 90–129 (AHILPLTNVALNKSGSCFITGSYDRTCKLWDTASGEELNT), 132–174 (GHRN…HTFR), 175–214 (GHTAEIVCLSFNPQSTLVATGSMDTTAKLWNIQNGEEVCT), 217–256 (GHSAEIISLSFNTSGDRIITGSFDHTVVVWDADTGGKVNI), 259–298 (GHCAEISSALFNWDCSLILTGSMDKTCMLWDATNGKCVAT), 301–340 (GHDDEILDSCFDYTGKLIATASADGTARIFSAATRKCIAK), 343–384 (GHEG…QVLE), and 386–415 (HTDEIFSCTFNYKGNIVITGSKDNTCRIWR).

It belongs to the WD repeat WDR69 family. As to quaternary structure, interacts with IFT46.

The protein resides in the cytoplasm. It localises to the cytoskeleton. The protein localises to the flagellum basal body. Its subcellular location is the flagellum axoneme. Functionally, required for axonemal dynein assembly and ciliary motility in ciliated organs, including Kupffer's vesicle, during embryogenesis. Facilitates the onset of robust cilia motility during development. The protein is Dynein assembly factor with WD repeat domains 1 (DAW1) of Macaca fascicularis (Crab-eating macaque).